Reading from the N-terminus, the 217-residue chain is Large ribosomal subunit protein uL1 (217 aa).

Position 2 is an N-acetylserine (Ser-2). Tyr-11 carries the phosphotyrosine modification. Residues Lys-91 and Lys-106 each carry the N6-acetyllysine modification. Residue Lys-118 is modified to N6-acetyllysine; alternate. Lys-118 is covalently cross-linked (Glycyl lysine isopeptide (Lys-Gly) (interchain with G-Cter in SUMO1); alternate). Residue Lys-118 forms a Glycyl lysine isopeptide (Lys-Gly) (interchain with G-Cter in SUMO2); alternate linkage.

It belongs to the universal ribosomal protein uL1 family. In terms of assembly, component of the large ribosomal subunit.

Its subcellular location is the cytoplasm. Component of the large ribosomal subunit. The ribosome is a large ribonucleoprotein complex responsible for the synthesis of proteins in the cell. This chain is Large ribosomal subunit protein uL1 (RPL10A), found in Macaca fascicularis (Crab-eating macaque).